The sequence spans 146 residues: Ribosome maturation factor RimP (146 aa).

The protein belongs to the RimP family.

It is found in the cytoplasm. Its function is as follows. Required for maturation of 30S ribosomal subunits. This is Ribosome maturation factor RimP from Helicobacter pylori (strain G27).